Consider the following 111-residue polypeptide: UPF0145 protein RBAM_010660 (111 aa).

This sequence belongs to the UPF0145 family.

This Bacillus velezensis (strain DSM 23117 / BGSC 10A6 / LMG 26770 / FZB42) (Bacillus amyloliquefaciens subsp. plantarum) protein is UPF0145 protein RBAM_010660.